Here is a 138-residue protein sequence, read N- to C-terminus: Acidic phospholipase A2 BthA-1 (138 aa).

An N-terminal signal peptide occupies residues 1 to 16; it reads MRTLWIMAVLLVGVEG. 7 cysteine pairs are disulfide-bonded: C42/C131, C44/C60, C59/C111, C65/C138, C66/C104, C73/C97, and C91/C102. Residues Y43, G47, and G48 each coordinate Ca(2+). The active site involves H63. Residue D64 coordinates Ca(2+). Residue D105 is part of the active site.

Belongs to the phospholipase A2 family. Group II subfamily. D49 sub-subfamily. As to quaternary structure, homodimer; non-covalently linked. It depends on Ca(2+) as a cofactor. As to expression, expressed by the venom gland.

It is found in the secreted. It catalyses the reaction a 1,2-diacyl-sn-glycero-3-phosphocholine + H2O = a 1-acyl-sn-glycero-3-phosphocholine + a fatty acid + H(+). Inhibited by EDTA and bromophenacyl bromide (BPB). In terms of biological role, snake venom phospholipase A2 (PLA2) that displays edema-inducing activities (activity that is inhibited by EDTA and dexamethasone), inhibits phospholipid-dependent collagen/ADP-induced platelet aggregation, possess hypotensive as well as anticoagulant activities. In addition, this enzyme shows bactericidal activity against E.coli and S.aureus. PLA2 catalyzes the calcium-dependent hydrolysis of the 2-acyl groups in 3-sn-phosphoglycerides. The polypeptide is Acidic phospholipase A2 BthA-1 (Bothrops jararacussu (Jararacussu)).